We begin with the raw amino-acid sequence, 388 residues long: Chorismate synthase (388 aa).

The NADP(+) site is built by Arg-39 and Arg-45. Residues 130 to 132 (RSS), 251 to 252 (NA), Gly-296, 311 to 315 (KPIPT), and Arg-337 contribute to the FMN site.

Belongs to the chorismate synthase family. As to quaternary structure, homotetramer. FMNH2 is required as a cofactor.

The catalysed reaction is 5-O-(1-carboxyvinyl)-3-phosphoshikimate = chorismate + phosphate. It functions in the pathway metabolic intermediate biosynthesis; chorismate biosynthesis; chorismate from D-erythrose 4-phosphate and phosphoenolpyruvate: step 7/7. Functionally, catalyzes the anti-1,4-elimination of the C-3 phosphate and the C-6 proR hydrogen from 5-enolpyruvylshikimate-3-phosphate (EPSP) to yield chorismate, which is the branch point compound that serves as the starting substrate for the three terminal pathways of aromatic amino acid biosynthesis. This reaction introduces a second double bond into the aromatic ring system. This Streptococcus pyogenes serotype M2 (strain MGAS10270) protein is Chorismate synthase.